A 206-amino-acid chain; its full sequence is Large ribosomal subunit protein mL40 (206 aa).

Residues 1 to 46 (MATGVMLCAARALRPRSWIPGTCQAHVRHTHQRASLLAFWDLIPMR) constitute a mitochondrion transit peptide. Positions 170–189 (PFEKEGPHYTPPISNYQAPE) are disordered.

It belongs to the mitochondrion-specific ribosomal protein mL40 family. Component of the mitochondrial ribosome large subunit (39S) which comprises a 16S rRNA and about 50 distinct proteins. Ubiquitous.

The protein localises to the mitochondrion. The chain is Large ribosomal subunit protein mL40 (Mrpl40) from Mus musculus (Mouse).